Reading from the N-terminus, the 305-residue chain is Aquaporin-1 (305 aa).

Positions 1 to 34 are disordered; that stretch reads MSSNDSNDTDKQHTRLDPTGVDDAYIPPEQPETK. At 1–48 the chain is on the cytoplasmic side; sequence MSSNDSNDTDKQHTRLDPTGVDDAYIPPEQPETKHHRFKISRDTLRDH. A helical membrane pass occupies residues 49-69; the sequence is FIAAVGEFCGTFMFLWCAYVI. Over 70-91 the chain is Extracellular; it reads CNVANHDVALVAAPDGSHPGQL. Residues 92-112 form a helical membrane-spanning segment; that stretch reads IMIAIGFGFSVMFSIWCFAGV. Over 113 to 136 the chain is Cytoplasmic; the sequence is SGGALNPAMSLSLCLARAVSPTRC. The NPA 1 motif lies at 118-120; it reads NPA. A helical membrane pass occupies residues 137–157; sequence VVMWVSQIVAGMAAGGAASAM. The Extracellular portion of the chain corresponds to 158-176; the sequence is TPGEVLFANSLGLGCSRTR. Residues 177–197 form a helical membrane-spanning segment; it reads GLFLEMFGTAILCLTVLMTAV. Topologically, residues 198–203 are cytoplasmic; sequence EKRETN. Residues 204–224 traverse the membrane as a helical segment; the sequence is FMAALPIGISLFIAHVALTAY. Over 225-248 the chain is Extracellular; that stretch reads TGTGVNPARSLGAAVAARYFPHYH. The short motif at 230-232 is the NPA 2 element; sequence NPA. A helical transmembrane segment spans residues 249-269; the sequence is WIYWIGTLLGSILAWSVWQLL. Residues 270–305 are Cytoplasmic-facing; sequence QILDYTTYVTAEKAASTKEKAQKKGETSSSSAVAEV. Residues 286–295 show a composition bias toward basic and acidic residues; sequence TKEKAQKKGE. The disordered stretch occupies residues 286–305; it reads TKEKAQKKGETSSSSAVAEV. Polar residues predominate over residues 296–305; the sequence is TSSSSAVAEV.

The protein belongs to the MIP/aquaporin (TC 1.A.8) family.

It localises to the endoplasmic reticulum membrane. The protein localises to the cell membrane. In terms of biological role, water channel required to facilitate the transport of water across membranes. Involved in sporulation, freeze tolerance and osmotolerance. Is non-functional in most laboratory strains. The protein is Aquaporin-1 (AQY1) of Saccharomyces cerevisiae (strain ATCC 204508 / S288c) (Baker's yeast).